The chain runs to 365 residues: uncharacterized protein (365 aa).

Positions phenylalanine 45–lysine 289 constitute a Radical SAM core domain. 3 residues coordinate [4Fe-4S] cluster: cysteine 60, cysteine 68, and cysteine 71.

[4Fe-4S] cluster serves as cofactor.

This is an uncharacterized protein from Methanocaldococcus jannaschii (strain ATCC 43067 / DSM 2661 / JAL-1 / JCM 10045 / NBRC 100440) (Methanococcus jannaschii).